Here is a 94-residue protein sequence, read N- to C-terminus: DNA-directed RNA polymerase subunit omega (94 aa).

The protein belongs to the RNA polymerase subunit omega family. The RNAP catalytic core consists of 2 alpha, 1 beta, 1 beta' and 1 omega subunit. When a sigma factor is associated with the core the holoenzyme is formed, which can initiate transcription.

It carries out the reaction RNA(n) + a ribonucleoside 5'-triphosphate = RNA(n+1) + diphosphate. Functionally, promotes RNA polymerase assembly. Latches the N- and C-terminal regions of the beta' subunit thereby facilitating its interaction with the beta and alpha subunits. The polypeptide is DNA-directed RNA polymerase subunit omega (Shewanella pealeana (strain ATCC 700345 / ANG-SQ1)).